Consider the following 355-residue polypeptide: UDP-N-acetylglucosamine--N-acetylmuramyl-(pentapeptide) pyrophosphoryl-undecaprenol N-acetylglucosamine transferase (355 aa).

UDP-N-acetyl-alpha-D-glucosamine-binding positions include 15–17 (TGG), N127, R163, S191, I244, 263–268 (ALTVSE), and Q288.

It belongs to the glycosyltransferase 28 family. MurG subfamily.

The protein localises to the cell inner membrane. It carries out the reaction di-trans,octa-cis-undecaprenyl diphospho-N-acetyl-alpha-D-muramoyl-L-alanyl-D-glutamyl-meso-2,6-diaminopimeloyl-D-alanyl-D-alanine + UDP-N-acetyl-alpha-D-glucosamine = di-trans,octa-cis-undecaprenyl diphospho-[N-acetyl-alpha-D-glucosaminyl-(1-&gt;4)]-N-acetyl-alpha-D-muramoyl-L-alanyl-D-glutamyl-meso-2,6-diaminopimeloyl-D-alanyl-D-alanine + UDP + H(+). Its pathway is cell wall biogenesis; peptidoglycan biosynthesis. In terms of biological role, cell wall formation. Catalyzes the transfer of a GlcNAc subunit on undecaprenyl-pyrophosphoryl-MurNAc-pentapeptide (lipid intermediate I) to form undecaprenyl-pyrophosphoryl-MurNAc-(pentapeptide)GlcNAc (lipid intermediate II). In Cronobacter sakazakii (strain ATCC BAA-894) (Enterobacter sakazakii), this protein is UDP-N-acetylglucosamine--N-acetylmuramyl-(pentapeptide) pyrophosphoryl-undecaprenol N-acetylglucosamine transferase.